We begin with the raw amino-acid sequence, 342 residues long: Ketol-acid reductoisomerase (NADP(+)) (342 aa).

A KARI N-terminal Rossmann domain is found at 2–182 (AELFYDDDAD…GGLRAAGIKT (181 aa)). NADP(+) contacts are provided by residues 25–28 (YGSQ), Arg48, Ser51, Ser53, and 83–86 (DQHQ). His108 is an active-site residue. Gly134 provides a ligand contact to NADP(+). Residues 183–328 (TFTEETETDL…RELRKLFAWV (146 aa)) enclose the KARI C-terminal knotted domain. Asp191, Glu195, Glu227, and Glu231 together coordinate Mg(2+). Substrate is bound at residue Ser252.

It belongs to the ketol-acid reductoisomerase family. Requires Mg(2+) as cofactor.

The enzyme catalyses (2R)-2,3-dihydroxy-3-methylbutanoate + NADP(+) = (2S)-2-acetolactate + NADPH + H(+). The catalysed reaction is (2R,3R)-2,3-dihydroxy-3-methylpentanoate + NADP(+) = (S)-2-ethyl-2-hydroxy-3-oxobutanoate + NADPH + H(+). It participates in amino-acid biosynthesis; L-isoleucine biosynthesis; L-isoleucine from 2-oxobutanoate: step 2/4. Its pathway is amino-acid biosynthesis; L-valine biosynthesis; L-valine from pyruvate: step 2/4. Functionally, involved in the biosynthesis of branched-chain amino acids (BCAA). Catalyzes an alkyl-migration followed by a ketol-acid reduction of (S)-2-acetolactate (S2AL) to yield (R)-2,3-dihydroxy-isovalerate. In the isomerase reaction, S2AL is rearranged via a Mg-dependent methyl migration to produce 3-hydroxy-3-methyl-2-ketobutyrate (HMKB). In the reductase reaction, this 2-ketoacid undergoes a metal-dependent reduction by NADPH to yield (R)-2,3-dihydroxy-isovalerate. This chain is Ketol-acid reductoisomerase (NADP(+)), found in Beutenbergia cavernae (strain ATCC BAA-8 / DSM 12333 / CCUG 43141 / JCM 11478 / NBRC 16432 / NCIMB 13614 / HKI 0122).